Consider the following 184-residue polypeptide: ATP synthase subunit b, chloroplastic (184 aa).

The helical transmembrane segment at 27–49 threads the bilayer; that stretch reads LATNPINLSVVFGVLIFFGKGVL.

The protein belongs to the ATPase B chain family. In terms of assembly, F-type ATPases have 2 components, F(1) - the catalytic core - and F(0) - the membrane proton channel. F(1) has five subunits: alpha(3), beta(3), gamma(1), delta(1), epsilon(1). F(0) has four main subunits: a(1), b(1), b'(1) and c(10-14). The alpha and beta chains form an alternating ring which encloses part of the gamma chain. F(1) is attached to F(0) by a central stalk formed by the gamma and epsilon chains, while a peripheral stalk is formed by the delta, b and b' chains.

Its subcellular location is the plastid. The protein localises to the chloroplast thylakoid membrane. F(1)F(0) ATP synthase produces ATP from ADP in the presence of a proton or sodium gradient. F-type ATPases consist of two structural domains, F(1) containing the extramembraneous catalytic core and F(0) containing the membrane proton channel, linked together by a central stalk and a peripheral stalk. During catalysis, ATP synthesis in the catalytic domain of F(1) is coupled via a rotary mechanism of the central stalk subunits to proton translocation. Its function is as follows. Component of the F(0) channel, it forms part of the peripheral stalk, linking F(1) to F(0). The polypeptide is ATP synthase subunit b, chloroplastic (Arabidopsis thaliana (Mouse-ear cress)).